Here is a 526-residue protein sequence, read N- to C-terminus: Lysine--tRNA ligase (526 aa).

The 'HIGH' region motif lies at 44–52; that stretch reads PSGLPHIGT. A 'KMSKS' region motif is present at residues 290 to 294; sequence KISKS. Lys293 contributes to the ATP binding site.

Belongs to the class-I aminoacyl-tRNA synthetase family.

The protein resides in the cytoplasm. It catalyses the reaction tRNA(Lys) + L-lysine + ATP = L-lysyl-tRNA(Lys) + AMP + diphosphate. This chain is Lysine--tRNA ligase, found in Rickettsia typhi (strain ATCC VR-144 / Wilmington).